The following is a 299-amino-acid chain: Ribonuclease 3-like protein 3 (299 aa).

The 145-residue stretch at 39–183 (VAAVESLLGY…LIGAIYCDSN (145 aa)) folds into the RNase III domain. 3 residues coordinate Mg(2+): Glu79, Asp169, and Glu172. One can recognise a DRBM domain in the interval 209–273 (HPVSELFEFC…AKAALDKLKE (65 aa)). The disordered stretch occupies residues 274–299 (TLGQSQTEPMSAEVSEQFNKIDLTGS). The span at 275-291 (LGQSQTEPMSAEVSEQF) shows a compositional bias: polar residues.

It depends on Mg(2+) as a cofactor. Mn(2+) is required as a cofactor.

In terms of biological role, cleaves double-stranded RNA (dsRNA). The chain is Ribonuclease 3-like protein 3 from Oryza sativa subsp. japonica (Rice).